The sequence spans 344 residues: tRNA N6-adenosine threonylcarbamoyltransferase (344 aa).

The Fe cation site is built by His119 and His123. Substrate is bound by residues 141–145, Asp174, Gly187, Asp191, and Asn280; that span reads VVSGG. Asp310 contacts Fe cation.

The protein belongs to the KAE1 / TsaD family. The cofactor is Fe(2+).

The protein localises to the cytoplasm. It carries out the reaction L-threonylcarbamoyladenylate + adenosine(37) in tRNA = N(6)-L-threonylcarbamoyladenosine(37) in tRNA + AMP + H(+). Functionally, required for the formation of a threonylcarbamoyl group on adenosine at position 37 (t(6)A37) in tRNAs that read codons beginning with adenine. Is involved in the transfer of the threonylcarbamoyl moiety of threonylcarbamoyl-AMP (TC-AMP) to the N6 group of A37, together with TsaE and TsaB. TsaD likely plays a direct catalytic role in this reaction. The polypeptide is tRNA N6-adenosine threonylcarbamoyltransferase (Listeria innocua serovar 6a (strain ATCC BAA-680 / CLIP 11262)).